The following is a 103-amino-acid chain: Putative truncated guanine nucleotide exchange factor YLL017W (103 aa).

The SH3 domain occupies 26–97; that stretch reads QPIDVVECTY…PPSFYTVHSK (72 aa).

This Saccharomyces cerevisiae (strain ATCC 204508 / S288c) (Baker's yeast) protein is Putative truncated guanine nucleotide exchange factor YLL017W.